A 208-amino-acid chain; its full sequence is Probable nicotinate-nucleotide adenylyltransferase (208 aa).

The protein belongs to the NadD family.

It carries out the reaction nicotinate beta-D-ribonucleotide + ATP + H(+) = deamido-NAD(+) + diphosphate. The protein operates within cofactor biosynthesis; NAD(+) biosynthesis; deamido-NAD(+) from nicotinate D-ribonucleotide: step 1/1. Functionally, catalyzes the reversible adenylation of nicotinate mononucleotide (NaMN) to nicotinic acid adenine dinucleotide (NaAD). The protein is Probable nicotinate-nucleotide adenylyltransferase of Symbiobacterium thermophilum (strain DSM 24528 / JCM 14929 / IAM 14863 / T).